Reading from the N-terminus, the 2124-residue chain is MSASEDLQSAVQPAASEALEGFPLSPLQTRAWRRHAERPENTVVGVRLHAPADPVATLERLRRALDGEAQLRVAYRTMPGMSLPVQVLDGRAADLLVERLPGDGDWAGRFARESARLAASPLGGEGQPVLALGLLLDAAGETLQGLLLAAPAFVVDAASLVALLRRGLGPAGQASADEGDEALLFQHFSEWANEALAGEDGESASGYWREQAAVAAESPLALADDLGEGEWTARRLLPRALLERLAANGLPEAAALLAWTQVAGQFQGDEGLPLEMARLVSGRLFNEFAELAGPFAGVAPLCLENVRAGSVGERLDALQAAILAQEEAAALRDPFAPDWPLAELGFAWLAGELDGAGVAELDCRQPPLGGFLELQVLPHGEGRLASLRVRRDHDGTLAGRLLDAWVECLESIAADRQLPLAGLPLIGAAERERYQAWQGERVEPAPVESLVAAFDLRAALQPQAPALLDAHGSLDFATLRARSEAVAEALLAAGVRPGQAVAVMTGRNREAIVALLGVMRAAAVYTPVNPEFPAARVERMREAGGIVFALADAECAGRAREAFAGACLDLSTLPLAGSGMSLPAPGGRDAAYMIFTSGTSGQPKGVVVEHASALNLSQALARTVYANVVGEGLRVTVNAPFSFDSSIKQILQLLSGHCLVLVPQEVRSDPQRMLGFLEERRIDVLDCTPSLFRLLLQAGLDDAHPALPGRILVGGERFDEASWEVAAGWRRCQVFNLYGPTEATVNASLARVAEHARPTIGRALANVDLHVVDGLGRRKTRGASGELWIGGAGVARGYAGDAGEAAGRFVEEGWPGSGRLYRSGDLVRWRADGCLEFLGRIDEQVKINGYRIELGEIRSALLEHPAVGEAAVLTDEADAAEPGADRRIVAFVTAAEETADESWLEVDLPSGHRVAGLNLNETEYVYQEIFVDEVYSRDGIVLPPDAVVLDVGANIGLFSLYIASRAPRARVVAFEPLAPIRRRLEANLGRYAPQVEVFGIGLSDAEREETFTYYPGYSTFSGIAEYADASGERDVIRRYLSNQGEEGGANLLLDNIDEILDDRLRAEAHRCRLRRLDQVIGELGLERIDLLKIDVQRAEMDVLLGLDDAALAKVRQIVLEVHDKRDGATAGRADALSDLLRRHGFEVSIRQDALLEGTDRYNCYAVRPGYAESLAERIDWRALAPRPAAALGGELSEQALRGFLEARLPAYMLPSRIARVERLPLTAEGKLDRRALLAALAAEAAAQTLEAPANATEAALLEIWKSVLKRPAIGVSDNFFQVGGDSIRLIQMQVMAREAGLAFTLRDVFNHQSIRELARLLAAPASPADALGTSAPQSLEPFALLSAAERKRLPEGLDDAYPMTSLQQGMLLQSEASGDPRLLHNVVLHEVHGRLDGELLARAWAILIGRHAILRTGFDLHGGQVPLQWVHPATAVAAEVPVHDLCGLDGETRRLRLRAWIEEEQATPFDWSRPPLVRLAALALDERRFALGVAEHHSVLDGWSLQSLVDELLAVYADLLAGVVAREAEAPAVGFRDYVALEREAEANAASALFWLDYLAGARYRPLPGLAEEGPRRMAAVRVDVPADSLSRLRALAERSGLPLRSLLLAAHGRALCRFSDADEVVTGFVSHGRPEEPGADRLLGLFLNTLPCRLSASVDLLDSARRAFDYERASLEHRRHPLAAIRRRNRELRLDSLFNFVDFHQDDAAPAGVRHGGILDQVVVDVDVPLAVDFEVAGERLEVGFQYAAGRFPAERAEALAGAYREALLALLGDPVQPPAAAQAEDSVELRRVLKVLSRVLGRPLAADQGFASAGGHSLLGVQAIAELRRLTGRQLSLGLLQGDPDAREVVRRCHAADAPPLPPATERARALWLQRSGSAQPRLRLIALPPAGGNAGTFRGWDARLPADVELLAIQYPGRQERQDEPFVTDVEAMLCAIDDALLPLLDRPFALIGASLGGMLAYELAARLESLHGLRARQLFVISSRAPGPDLEYPRFHAMGDAELLRTLREYDVLPLEVLDDPELREISLATLRADSRLAADYRYRPREPLAIPITAILGEQDPGVSRVAIDGWRRHASRYELETLAGGHGLVVTAAEEVCAILRQRLAPDVPGGVPANLAT.

An adenylation region spans residues 456-847 (LRAALQPQAP…LGRIDEQVKI (392 aa)). The tract at residues 950 to 1147 (DVGANIGLFS…DLLRRHGFEV (198 aa)) is methyltransferase. One can recognise a Carrier 1 domain in the interval 1251 to 1325 (APANATEAAL…ELARLLAAPA (75 aa)). Serine 1286 carries the O-(pantetheine 4'-phosphoryl)serine modification. Residues 1359-1780 (DAYPMTSLQQ…ALLGDPVQPP (422 aa)) are condensation. The Carrier 2 domain maps to 1785-1859 (AEDSVELRRV…EVVRRCHAAD (75 aa)). Residue serine 1819 is modified to O-(pantetheine 4'-phosphoryl)serine. The interval 1886–2107 (RLIALPPAGG…AAEEVCAILR (222 aa)) is thioesterase.

This sequence belongs to the NRP synthetase family. Pantetheine 4'-phosphate serves as cofactor.

The enzyme catalyses holo-[peptidyl-carrier protein] + L-glutamate + ATP = L-glutamyl-[peptidyl-carrier protein] + AMP + diphosphate. Functionally, involved in the biosynthesis of the antimetabolite L-2-amino-4-methoxy-trans-3-butenoic acid (AMB), a non-proteinogenic amino acid which is toxic for prokaryotes and eukaryotes. Adenylates L-glutamate and loads it onto its first peptidyl carrier domain via a thioester linkage to the phosphopanthetheine moiety. The second peptidyl carrier domain is loaded with a L-alanine activated by AmbB. After formation by AmbB of the L-Glu-L-Ala dipeptide at the first carrier domain of AmbE, the condensation domain of AmbE probably condenses this dipeptide with the L-Ala residue attached at the second carrier domain of AmbE to give the L-Ala-L-Glu-L-Ala tripeptide. The central amino acid, L-Glu, would then undergo a series of modifications to be converted into AMB while the two flanking L-Ala residues remain in place. Finally, the L-Ala-AMB-L-Ala tripeptide is probably released by thioester cleavage via the thioester domain of AmbE. This is AMB antimetabolite synthetase AmbE from Pseudomonas aeruginosa (strain ATCC 15692 / DSM 22644 / CIP 104116 / JCM 14847 / LMG 12228 / 1C / PRS 101 / PAO1).